We begin with the raw amino-acid sequence, 1065 residues long: Outer capsid protein VP3 (1065 aa).

Its subcellular location is the virion. It catalyses the reaction a 5'-end diphospho-ribonucleoside in mRNA + GTP + H(+) = a 5'-end (5'-triphosphoguanosine)-ribonucleoside in mRNA + diphosphate. The enzyme catalyses a 5'-end (5'-triphosphoguanosine)-ribonucleoside in mRNA + S-adenosyl-L-methionine = a 5'-end (N(7)-methyl 5'-triphosphoguanosine)-ribonucleoside in mRNA + S-adenosyl-L-homocysteine. Its function is as follows. Outer capsid protein involved in mRNA capping. Catalyzes the last 3 enzymatic activities for formation of the 5' cap structure on the viral plus-strand transcripts, namely the RNA guanylyltransferase, RNA-7N- and RNA-2'O-methyltransferase activities. The polypeptide is Outer capsid protein VP3 (S3) (Cryphonectria parasitica mycoreovirus 1 (strain 9B21) (CpMYRV-1)).